Reading from the N-terminus, the 293-residue chain is NAD kinase (293 aa).

D73 acts as the Proton acceptor in catalysis. Residues 73–74, H78, 147–148, R158, R175, D177, 188–193, and Q248 contribute to the NAD(+) site; these read DG, ND, and TAYALS.

This sequence belongs to the NAD kinase family. A divalent metal cation is required as a cofactor.

It localises to the cytoplasm. It carries out the reaction NAD(+) + ATP = ADP + NADP(+) + H(+). Its function is as follows. Involved in the regulation of the intracellular balance of NAD and NADP, and is a key enzyme in the biosynthesis of NADP. Catalyzes specifically the phosphorylation on 2'-hydroxyl of the adenosine moiety of NAD to yield NADP. This is NAD kinase from Nitrosococcus oceani (strain ATCC 19707 / BCRC 17464 / JCM 30415 / NCIMB 11848 / C-107).